The primary structure comprises 322 residues: Malate dehydrogenase 1 (322 aa).

Residues 10–15 and Asp34 contribute to the NAD(+) site; that span reads GSGQIG. Residues Arg83 and Arg89 each contribute to the substrate site. Residues Asn96 and 119–121 contribute to the NAD(+) site; that span reads ITN. 2 residues coordinate substrate: Asn121 and Arg152. The Proton acceptor role is filled by His176.

Belongs to the LDH/MDH superfamily. MDH type 3 family.

The enzyme catalyses (S)-malate + NAD(+) = oxaloacetate + NADH + H(+). In terms of biological role, catalyzes the reversible oxidation of malate to oxaloacetate. This is Malate dehydrogenase 1 from Rhodopseudomonas palustris (strain BisB18).